The sequence spans 108 residues: Urease subunit beta (108 aa).

It belongs to the urease beta subunit family. As to quaternary structure, heterotrimer of UreA (gamma), UreB (beta) and UreC (alpha) subunits. Three heterotrimers associate to form the active enzyme.

The protein resides in the cytoplasm. The enzyme catalyses urea + 2 H2O + H(+) = hydrogencarbonate + 2 NH4(+). It functions in the pathway nitrogen metabolism; urea degradation; CO(2) and NH(3) from urea (urease route): step 1/1. This chain is Urease subunit beta, found in Proteus hauseri.